Reading from the N-terminus, the 112-residue chain is MVDDELAELRRRRMEQMQRQAMDQQGMEEEAARQQQIDAQVRAALMEILEPEARERLNTIKLTRPEFAKAVEQQLVMLAQSGRVRQRITDEQLKALLAQLTPSKKEFRITRK.

The tract at residues Met-14–Gln-35 is disordered.

Belongs to the PDCD5 family.

The protein is DNA-binding protein Memar_1972 of Methanoculleus marisnigri (strain ATCC 35101 / DSM 1498 / JR1).